A 399-amino-acid chain; its full sequence is Succinate--CoA ligase [ADP-forming] subunit beta (399 aa).

The region spanning 9–254 is the ATP-grasp domain; sequence KQVLAKYGVP…EDEEDPMELE (246 aa). ATP is bound by residues lysine 46, 53-55, glutamate 109, cysteine 112, and glutamate 117; that span reads GRG. Residues asparagine 209 and aspartate 223 each contribute to the Mg(2+) site. Residues asparagine 274 and 331–333 contribute to the substrate site; that span reads GIM.

The protein belongs to the succinate/malate CoA ligase beta subunit family. As to quaternary structure, heterotetramer of two alpha and two beta subunits. Requires Mg(2+) as cofactor.

It carries out the reaction succinate + ATP + CoA = succinyl-CoA + ADP + phosphate. The enzyme catalyses GTP + succinate + CoA = succinyl-CoA + GDP + phosphate. It functions in the pathway carbohydrate metabolism; tricarboxylic acid cycle; succinate from succinyl-CoA (ligase route): step 1/1. Succinyl-CoA synthetase functions in the citric acid cycle (TCA), coupling the hydrolysis of succinyl-CoA to the synthesis of either ATP or GTP and thus represents the only step of substrate-level phosphorylation in the TCA. The beta subunit provides nucleotide specificity of the enzyme and binds the substrate succinate, while the binding sites for coenzyme A and phosphate are found in the alpha subunit. This is Succinate--CoA ligase [ADP-forming] subunit beta from Rhodospirillum rubrum (strain ATCC 11170 / ATH 1.1.1 / DSM 467 / LMG 4362 / NCIMB 8255 / S1).